Reading from the N-terminus, the 1053-residue chain is LRR receptor-like serine/threonine-protein kinase GHR1 (1053 aa).

An N-terminal signal peptide occupies residues 1 to 18 (MNLSRILLLSMFFLSAMG). Residues 19–630 (QLPSQDIMAL…NKSTNKLVKV (612 aa)) are Extracellular-facing. 13 LRR repeats span residues 73–93 (GVVL…FSNL), 94–119 (TKLV…SFKS), 121–141 (QFLD…IGRS), 142–165 (VSLR…MGGL), 166–189 (ISLQ…LTRL), 191–212 (DLLY…GFEL), 213–237 (ISSL…FFLL), 239–260 (NASY…LLPG), 262–285 (SESI…GFQL), 286–309 (FQNL…FNYV), 310–333 (YDLE…LLKG), 335–357 (SLLL…SIMS), and 358–384 (TTLH…CVLL). Residue asparagine 92 is glycosylated (N-linked (GlcNAc...) asparagine). A phosphoserine; by HT1 mark is found at serine 100 and serine 102. N-linked (GlcNAc...) asparagine glycosylation occurs at asparagine 103. Phosphoserine; by HT1 is present on residues serine 105 and serine 126. N-linked (GlcNAc...) asparagine glycosylation is found at asparagine 146 and asparagine 153. N-linked (GlcNAc...) asparagine glycosylation is present at asparagine 196. Asparagine 239 is a glycosylation site (N-linked (GlcNAc...) asparagine). At serine 262 the chain carries Phosphoserine; by HT1. N-linked (GlcNAc...) asparagine glycosylation occurs at asparagine 269. Serine 278 bears the Phosphoserine; by HT1 mark. Threonine 280 carries the phosphothreonine; by HT1 modification. The residue at position 281 (serine 281) is a Phosphoserine; by HT1. Serine 325 is modified (phosphoserine; by HT1). Asparagine 347 carries an N-linked (GlcNAc...) asparagine glycan. Residue asparagine 394 is glycosylated (N-linked (GlcNAc...) asparagine). LRR repeat units lie at residues 401 to 425 (WENI…TPQL), 426 to 449 (LRAN…IPTH), 450 to 474 (YPKL…LLSM), 476 to 498 (TLEE…PSSG), 499 to 521 (SRIR…VFGS), 522 to 546 (LTNL…MNDI), 548 to 570 (SLSS…LSSN), and 572 to 592 (MAFN…LKNF). Residue tyrosine 406 is modified to Phosphotyrosine; by HT1. A Phosphoserine; by HT1 modification is found at serine 410. The residue at position 415 (threonine 415) is a Phosphothreonine; by HT1. Position 417 is a phosphoserine; by HT1 (serine 417). Asparagine 432 is a glycosylation site (N-linked (GlcNAc...) asparagine). Residue serine 434 is modified to Phosphoserine; by HT1. 3 N-linked (GlcNAc...) asparagine glycosylation sites follow: asparagine 534, asparagine 566, and asparagine 575. Phosphoserine; by HT1 occurs at positions 613, 614, and 616. Asparagine 621 is a glycosylation site (N-linked (GlcNAc...) asparagine). A helical transmembrane segment spans residues 631 to 651 (VIIVSCAVALIILILVAILLF). Residues 652–1053 (CICKSRRREE…KTIYEDLSSI (402 aa)) are Cytoplasmic-facing. A compositionally biased stretch (basic and acidic residues) spans 662-671 (RSITGKETNR). The tract at residues 662 to 684 (RSITGKETNRRAQTIPSGSGGGM) is disordered. Residues threonine 669 and threonine 675 each carry the phosphothreonine; by HT1 modification. Serine 678, serine 680, serine 698, serine 699, and serine 700 each carry phosphoserine; by HT1. Position 704 is a phosphoserine (serine 704). At threonine 713 the chain carries Phosphothreonine; by HT1. Phosphoserine; by HT1 occurs at positions 716 and 718. A Phosphothreonine; by HT1 modification is found at threonine 720. Phosphoserine; by HT1 is present on residues serine 721, serine 724, and serine 760. Phosphothreonine; by HT1 is present on threonine 764. The residue at position 769 (serine 769) is a Phosphoserine; by HT1. Residues 770–1053 (RAPAEVLGRS…KTIYEDLSSI (284 aa)) form the Protein kinase domain. Residues 776 to 784 (LGRSSHGTS) and lysine 798 contribute to the ATP site. 2 positions are modified to phosphothreonine; by HT1: threonine 928 and threonine 1010. Serine 1015 carries the post-translational modification Phosphoserine; by HT1. At threonine 1045 the chain carries Phosphothreonine; by HT1. At tyrosine 1047 the chain carries Phosphotyrosine; by HT1. Phosphoserine; by HT1 is present on residues serine 1051 and serine 1052.

It belongs to the protein kinase superfamily. Ser/Thr protein kinase family. Interacts with SLAC1 (via N-terminus). Binds to ABI2, but not ABI1. Interacts with CPK3. In terms of processing, phosphorylated by HT1; this phosphorylation is inhibited by MPK12 and MPK4. As to expression, expressed in guard cells and in the vasculature of roots and leaves.

It is found in the cell membrane. The catalysed reaction is L-seryl-[protein] + ATP = O-phospho-L-seryl-[protein] + ADP + H(+). It carries out the reaction L-threonyl-[protein] + ATP = O-phospho-L-threonyl-[protein] + ADP + H(+). With respect to regulation, negatively regulated by ABI2. In terms of biological role, receptor kinase acting as an early component in abscisic acid (ABA) signaling. Required for darkness, ABA, high CO(2) and hydrogen peroxide (H(2)O(2)) induction of S-type anion currents in guard cells leading to stomatal closure, possibly via the phosphorylation and activation of the anion channel SLAC1 and as a scaffolding component. Seems to act in parallel with SRK2E/OST1 in the ABA signaling pathway which regulates stomatal movement. Binds ATP. Involved in the local and/or systemic stomatal responses (e.g. stomatal closure) to light stress. The protein is LRR receptor-like serine/threonine-protein kinase GHR1 of Arabidopsis thaliana (Mouse-ear cress).